The chain runs to 173 residues: MAAPSGGWNGVGASLWAALLLGAVALRPAEAVSEPTTVAFDVRPGGVVHSFSHNVGPGDKYTCMFTYASQGGTNEQWQMSLGTSEDHQHFTCTIWRPQGKSYLYFTQFKAEVRGAEIEYAMAYSKAAFERESDVPLKTEEFEVTKTAVAHRPGAFKAELSKLVIVAKASRTEL.

The N-terminal stretch at 1-31 (MAAPSGGWNGVGASLWAALLLGAVALRPAEA) is a signal peptide.

Belongs to the MYDGF family. As to expression, expressed in eosinophils (at protein level). Expressed in bone marrow cells. Expressed in synovial tissue. Found in synovial fluid of patients with arthropaties.

It localises to the secreted. It is found in the endoplasmic reticulum-Golgi intermediate compartment. Its subcellular location is the endoplasmic reticulum. The protein localises to the golgi apparatus. Functionally, bone marrow-derived monocyte and paracrine-acting protein that promotes cardiac myocyte survival and adaptive angiogenesis for cardiac protection and/or repair after myocardial infarction (MI). Stimulates endothelial cell proliferation through a MAPK1/3-, STAT3- and CCND1-mediated signaling pathway. Inhibits cardiac myocyte apoptosis in a PI3K/AKT-dependent signaling pathway. Involved in endothelial cell proliferation and angiogenesis. The chain is Myeloid-derived growth factor from Homo sapiens (Human).